Here is a 148-residue protein sequence, read N- to C-terminus: Large ribosomal subunit protein uL13 (148 aa).

This sequence belongs to the universal ribosomal protein uL13 family. Part of the 50S ribosomal subunit.

In terms of biological role, this protein is one of the early assembly proteins of the 50S ribosomal subunit, although it is not seen to bind rRNA by itself. It is important during the early stages of 50S assembly. This chain is Large ribosomal subunit protein uL13, found in Sulfolobus acidocaldarius (strain ATCC 33909 / DSM 639 / JCM 8929 / NBRC 15157 / NCIMB 11770).